The sequence spans 233 residues: MAKLTKRMRTIRAKVDVTKEYDINEAVALLKEMATAKFVESVDVAVNLGIDARKSDQNVRGATVLPHGTGRDIRVAVFTQGANAEAAKAAGAELVGMEDLADLVKKGEMNFDVVIASPDAMRVVGQLGTILGPRGLMPNPKVGTVTPNVAEAVKNAKAGQVRYRNDKNGIIHTTIGKVTFEADQLKENLEALLVALKKAKPSSAKGVFVKKVSISTTMGAGVAVDQNTLSAQV.

It belongs to the universal ribosomal protein uL1 family. In terms of assembly, part of the 50S ribosomal subunit.

Binds directly to 23S rRNA. The L1 stalk is quite mobile in the ribosome, and is involved in E site tRNA release. In terms of biological role, protein L1 is also a translational repressor protein, it controls the translation of the L11 operon by binding to its mRNA. The sequence is that of Large ribosomal subunit protein uL1 from Vibrio cholerae serotype O1 (strain ATCC 39541 / Classical Ogawa 395 / O395).